The following is a 318-amino-acid chain: Pantothenate kinase (318 aa).

ATP is bound at residue 96–103; it reads GSVAVGKS.

Belongs to the prokaryotic pantothenate kinase family.

The protein resides in the cytoplasm. It carries out the reaction (R)-pantothenate + ATP = (R)-4'-phosphopantothenate + ADP + H(+). Its pathway is cofactor biosynthesis; coenzyme A biosynthesis; CoA from (R)-pantothenate: step 1/5. The chain is Pantothenate kinase from Rhodopseudomonas palustris (strain HaA2).